Here is a 365-residue protein sequence, read N- to C-terminus: Methionine import ATP-binding protein MetN (365 aa).

An ABC transporter domain is found at 17–256; that stretch reads IVFEHVTKEF…PQSETTQRFL (240 aa). 53-60 provides a ligand contact to ATP; the sequence is GHSGAGKS. The disordered stretch occupies residues 346 to 365; it reads SNSAAPTTSATVPTPTEEAH.

It belongs to the ABC transporter superfamily. Methionine importer (TC 3.A.1.24) family. The complex is composed of two ATP-binding proteins (MetN), two transmembrane proteins (MetI) and a solute-binding protein (MetQ).

It localises to the cell membrane. It catalyses the reaction L-methionine(out) + ATP + H2O = L-methionine(in) + ADP + phosphate + H(+). It carries out the reaction D-methionine(out) + ATP + H2O = D-methionine(in) + ADP + phosphate + H(+). Its function is as follows. Part of the ABC transporter complex MetNIQ involved in methionine import. Responsible for energy coupling to the transport system. This chain is Methionine import ATP-binding protein MetN, found in Cutibacterium acnes (strain DSM 16379 / KPA171202) (Propionibacterium acnes).